The following is a 418-amino-acid chain: Sterigmatocystin 8-O-methyltransferase (418 aa).

The propeptide occupies 1 to 41 (MALPSKAALVGLANTLSEQVKRYLATAGETKSPEDHKLCIE). Residue 170-176 (MRSGASF) participates in substrate binding. The substrate binding stretch occupies residues 206–225 (LFDYYSTVDEVRGRRFDLGM). S-adenosyl-L-methionine is bound by residues 254-255 (GG), aspartate 277, 297-298 (DI), and arginine 313. Histidine 317 functions as the Proton acceptor in the catalytic mechanism.

It belongs to the class I-like SAM-binding methyltransferase superfamily. Cation-independent O-methyltransferase family. COMT subfamily.

The protein resides in the cytoplasm. Its subcellular location is the vacuole. The enzyme catalyses sterigmatocystin + S-adenosyl-L-methionine = 8-O-methylsterigmatocystin + S-adenosyl-L-homocysteine + H(+). It carries out the reaction dihydrosterigmatocystin + S-adenosyl-L-methionine = 8-O-methyldihydrosterigmatocystin + S-adenosyl-L-homocysteine + H(+). It functions in the pathway mycotoxin biosynthesis; aflatoxin biosynthesis. In terms of biological role, sterigmatocystin 8-O-methyltransferase; part of the gene cluster that mediates the biosynthesis of aflatoxins, a group of polyketide-derived furanocoumarins, and part of the most toxic and carcinogenic compounds among the known mycotoxins. The four major aflatoxins produced by A.parasiticus are aflatoxin B1 (AFB1), aflatoxin B2 (AFB2), aflatoxin G1 (AFG1) and aflatoxin G2 (AFG2). Within the aflatoxin pathway, the O-methyltransferase aflP uses both sterigmatocystin (ST) and dihydrosterigmatocystin (DHST) as substrates to yield O-methylsterigmatocystin (OMST) and dihydro-O-methylsterigmatocystin (DHOMST), respectively. The biosynthesis of aflatoxins begins with the norsolorinic acid synthase aflC that combines a hexanoyl starter unit produced by the fatty acid synthase aflA/aflB and 7 malonyl-CoA extender units to synthesize the precursor NOR. The second step is the conversion of NOR to averantin and requires the norsolorinic acid ketoreductase aflD, which catalyzes the dehydration of norsolorinic acid to form (1'S)-averantin. The norsolorinic acid reductases aflE and aflF may also play a role in the conversion of NOR to AVN. The cytochrome P450 monooxygenase aflG then catalyzes the hydroxylation of AVN to 5'hydroxyaverantin (HAVN). The next step is performed by the 5'-hydroxyaverantin dehydrogenase aflH that transforms HAVN to 5'-oxoaverantin (OAVN) which is further converted to averufin (AVF) by aflK that plays a dual role in the pathway, as a 5'-oxoaverantin cyclase that mediates conversion of 5'-oxoaverantin, as well as a versicolorin B synthase in a later step in the pathway. The averufin oxidase aflI catalyzes the conversion of AVF to versiconal hemiacetal acetate (VHA). VHA is then the substrate for the versiconal hemiacetal acetate esterase aflJ to yield versiconal (VAL). Versicolorin B synthase aflK then converts VAL to versicolorin B (VERB) by closing the bisfuran ring of aflatoxin which is required for DNA-binding, thus giving to aflatoxin its activity as a mutagen. Then, the activity of the versicolorin B desaturase aflL leads to versicolorin A (VERA). A branch point starts from VERB since it can also be converted to dihydrodemethylsterigmatocystin (DMDHST), probably also by aflL, VERA being a precursor for aflatoxins B1 and G1, and DMDHST for aflatoxins B2 and G2. Next, the versicolorin reductase aflM and the cytochrome P450 monooxygenase aflN are involved in conversion of VERA to demethylsterigmatocystin (DMST). AflX and aflY seem also involved in this step, through probable aflX-mediated epoxide ring-opening step following versicolorin A oxidation and aflY-mediated Baeyer-Villiger oxidation required for the formation of the xanthone ring. The methyltransferase aflO then leads to the modification of DMST to sterigmatocystin (ST), and of DMDHST to dihydrosterigmatocystin (DHST). Both ST and DHST are then substrates of the O-methyltransferase aflP to yield O-methylsterigmatocystin (OMST) and dihydro-O-methylsterigmatocystin (DHOMST), respectively. Finally OMST is converted to aflatoxins B1 and G1, and DHOMST to aflatoxins B2 and G2, via the action of several enzymes including O-methylsterigmatocystin oxidoreductase aflQ, the cytochrome P450 monooxygenase aflU, but also the NADH-dependent flavin oxidoreductase nadA which is specifically required for the synthesis of AFG1. In Aspergillus parasiticus (strain ATCC 56775 / NRRL 5862 / SRRC 143 / SU-1), this protein is Sterigmatocystin 8-O-methyltransferase.